Reading from the N-terminus, the 763-residue chain is MAP7 domain-containing protein 2 (763 aa).

Positions 1-11 (MERSGGNGAGA) are enriched in gly residues. Disordered stretches follow at residues 1–72 (MERS…REKC), 102–127 (LEEQRQREDQKRAAVEEKRKQKLREE), and 140–531 (ERTQ…KAMI). Over residues 12 to 31 (RAGAPSEGAAKGSSLLSAKS) the composition is skewed to low complexity. Residues 53-72 (LKSDERQRLAKERREEREKC) show a composition bias toward basic and acidic residues. Composition is skewed to polar residues over residues 184 to 212 (PSDTGTATAAAESTNACDKLSTSTMNLPK) and 241 to 251 (LKSSYKSSPTR). The segment covering 312–321 (KRSSSPVKSK) has biased composition (low complexity). Basic and acidic residues-rich tracts occupy residues 354–372 (ETLKKKAEKEKSNKEKEGA), 381–420 (PREETLEKPMADKDATEKYVADKHATEKHSATGGKAEHSA), and 437–531 (LAEK…KAMI). Residues 434–575 (AKILAEKRRQ…QERLERKKRI (142 aa)) adopt a coiled-coil conformation.

It belongs to the MAP7 family. Interacts (via N-terminus) with microtubules; facilitates microtubule stabilization. Interacts with kinesin-1 family members, KIF5A, KIF5B and KIF5C. In terms of tissue distribution, detected only in the brain and testis (at the protein level).

The protein resides in the cytoplasm. Its subcellular location is the cytoskeleton. It localises to the microtubule organizing center. The protein localises to the centrosome. It is found in the cell projection. The protein resides in the axon. Functionally, microtubule-stabilizing protein involved in the control of cell motility and neurite outgrowth. Acts as a critical cofactor for kinesin transport; in the proximal axon regulates kinesin-1 family members, KIF5A, KIF5B and KIF5C recruitment to microtubules and contributes to kinesin-1-mediated transport in the axons. The sequence is that of MAP7 domain-containing protein 2 (Map7d2) from Rattus norvegicus (Rat).